A 114-amino-acid chain; its full sequence is Photosystem II reaction center Psb28 protein (114 aa).

Belongs to the Psb28 family. Part of the photosystem II complex.

The protein resides in the plastid. The protein localises to the chloroplast thylakoid membrane. The chain is Photosystem II reaction center Psb28 protein from Thalassiosira pseudonana (Marine diatom).